A 205-amino-acid polypeptide reads, in one-letter code: Glycerol-3-phosphate acyltransferase (205 aa).

Residues 1 to 3 (MSA) are Periplasmic-facing. Residues 4 to 24 (IAPGMILFAYLCGSISSAILV) form a helical membrane-spanning segment. Residues 25–52 (CRIAGLPDPRESGSGNPGATNVLRIGGK) lie on the Cytoplasmic side of the membrane. A helical transmembrane segment spans residues 53–73 (GAAVAVLIFDILKGMLPVWGA). At 74-80 (YALGITP) the chain is on the periplasmic side. Residues 81–101 (FWLGLIAIAACLGHIWPVFFG) traverse the membrane as a helical segment. Residues 102–111 (FKGGKGVATA) are Cytoplasmic-facing. Residues 112 to 132 (FGAIAPIGWDLTGVIAGTWLL) form a helical membrane-spanning segment. Topologically, residues 133-137 (TVLLS) are periplasmic. A helical transmembrane segment spans residues 138–158 (GYSSLGAIVSALIAPFYVWWF). Residues 159 to 205 (KPQFTFPVSMLSCLILLRHHDNIQRLWRRQETKIWTKLKKKREKESK) lie on the Cytoplasmic side of the membrane.

The protein belongs to the PlsY family. As to quaternary structure, probably interacts with PlsX.

Its subcellular location is the cell inner membrane. The enzyme catalyses sn-glycerol 3-phosphate + an acyl-CoA = a 1-acyl-sn-glycero-3-phosphate + CoA. It catalyses the reaction a fatty acyl-[ACP] + sn-glycerol 3-phosphate = a 1-acyl-sn-glycero-3-phosphate + holo-[ACP]. It functions in the pathway lipid metabolism; phospholipid metabolism. In terms of biological role, catalyzes the transfer of an acyl group from acyl-ACP to glycerol-3-phosphate (G3P) to form lysophosphatidic acid (LPA). This enzyme can also utilize acyl-CoA as fatty acyl donor, but not acyl-PO(4). The sequence is that of Glycerol-3-phosphate acyltransferase from Salmonella arizonae (strain ATCC BAA-731 / CDC346-86 / RSK2980).